A 101-amino-acid chain; its full sequence is Ribonuclease P protein component 1 (101 aa).

This sequence belongs to the eukaryotic/archaeal RNase P protein component 1 family. Consists of a catalytic RNA component and at least 4-5 protein subunits.

The protein localises to the cytoplasm. The catalysed reaction is Endonucleolytic cleavage of RNA, removing 5'-extranucleotides from tRNA precursor.. In terms of biological role, part of ribonuclease P, a protein complex that generates mature tRNA molecules by cleaving their 5'-ends. This Methanococcoides burtonii (strain DSM 6242 / NBRC 107633 / OCM 468 / ACE-M) protein is Ribonuclease P protein component 1.